The primary structure comprises 185 residues: Large ribosomal subunit protein uL5 (185 aa).

It belongs to the universal ribosomal protein uL5 family. In terms of assembly, part of the 50S ribosomal subunit; part of the 5S rRNA/L5/L18/L25 subcomplex. Contacts the 5S rRNA and the P site tRNA. Forms a bridge to the 30S subunit in the 70S ribosome.

This is one of the proteins that bind and probably mediate the attachment of the 5S RNA into the large ribosomal subunit, where it forms part of the central protuberance. In the 70S ribosome it contacts protein S13 of the 30S subunit (bridge B1b), connecting the 2 subunits; this bridge is implicated in subunit movement. Contacts the P site tRNA; the 5S rRNA and some of its associated proteins might help stabilize positioning of ribosome-bound tRNAs. The polypeptide is Large ribosomal subunit protein uL5 (Streptomyces coelicolor (strain ATCC BAA-471 / A3(2) / M145)).